Here is a 262-residue protein sequence, read N- to C-terminus: Pyridoxine 5'-phosphate synthase (262 aa).

Position 6 (Asn-6) interacts with 3-amino-2-oxopropyl phosphate. 8-9 (DH) contacts 1-deoxy-D-xylulose 5-phosphate. 3-amino-2-oxopropyl phosphate is bound at residue Arg-17. His-42 acts as the Proton acceptor in catalysis. Residues Arg-44 and His-49 each contribute to the 1-deoxy-D-xylulose 5-phosphate site. Glu-69 functions as the Proton acceptor in the catalytic mechanism. Thr-99 contributes to the 1-deoxy-D-xylulose 5-phosphate binding site. His-213 acts as the Proton donor in catalysis. 3-amino-2-oxopropyl phosphate is bound by residues Gly-214 and 235 to 236 (GH).

It belongs to the PNP synthase family. In terms of assembly, homooctamer; tetramer of dimers.

Its subcellular location is the cytoplasm. It carries out the reaction 3-amino-2-oxopropyl phosphate + 1-deoxy-D-xylulose 5-phosphate = pyridoxine 5'-phosphate + phosphate + 2 H2O + H(+). Its pathway is cofactor biosynthesis; pyridoxine 5'-phosphate biosynthesis; pyridoxine 5'-phosphate from D-erythrose 4-phosphate: step 5/5. Functionally, catalyzes the complicated ring closure reaction between the two acyclic compounds 1-deoxy-D-xylulose-5-phosphate (DXP) and 3-amino-2-oxopropyl phosphate (1-amino-acetone-3-phosphate or AAP) to form pyridoxine 5'-phosphate (PNP) and inorganic phosphate. The polypeptide is Pyridoxine 5'-phosphate synthase (Wolinella succinogenes (strain ATCC 29543 / DSM 1740 / CCUG 13145 / JCM 31913 / LMG 7466 / NCTC 11488 / FDC 602W) (Vibrio succinogenes)).